The sequence spans 707 residues: Probable potassium transporter 17 (707 aa).

Residues 1-25 form a disordered region; the sequence is MDLEAGSIRPRSDGEGGGPAAGRET. Over 1–34 the chain is Cytoplasmic; sequence MDLEAGSIRPRSDGEGGGPAAGRETDDSNVWKDL. A helical transmembrane segment spans residues 35-55; it reads FLAYKTLGVVFGGLVTSPLYV. Topologically, residues 56-71 are extracellular; that stretch reads YPSMNLSSPTEADYLG. A glycan (N-linked (GlcNAc...) asparagine) is linked at Asn-60. A helical membrane pass occupies residues 72–92; it reads IYSIMFWTLTLIGVVKYVCIA. Residues 93-157 lie on the Cytoplasmic side of the membrane; sequence LNADDHGEGG…FFEQSITARR (65 aa). Residues 158–178 traverse the membrane as a helical segment; that stretch reads VLLFVAVLGMCMLIGDGILTP. Residues 179-194 are Extracellular-facing; the sequence is AISVLSAIDGIRGPFP. A helical transmembrane segment spans residues 195–215; the sequence is TVSKPVVEALSAAILIGLFLL. Over 216-222 the chain is Cytoplasmic; it reads QKYGTSK. Residues 223-243 traverse the membrane as a helical segment; sequence VSFLFSPIMAAWTFTTPIIGL. Over 244–276 the chain is Extracellular; sequence YSIVHYYPGIFKAISPYYIVHFFLRNKRQGWQL. Residues 277-297 traverse the membrane as a helical segment; that stretch reads LGGTVLCITGAEAMFADLGHF. The Cytoplasmic portion of the chain corresponds to 298–305; it reads SKKAIQIA. Residues 306-326 traverse the membrane as a helical segment; that stretch reads FLSSIYPSLVLTYAGQTAYLI. Topologically, residues 327 to 343 are extracellular; sequence NNVNDFGDGFYKFVPRP. Residues 344 to 364 traverse the membrane as a helical segment; the sequence is VYWPMFVVATLAAIVASQSLI. Topologically, residues 365–402 are cytoplasmic; the sequence is SATFSVIKQSVVLDYFPRVKVVHTSQHKEGEVYSPEIN. A helical membrane pass occupies residues 403–423; sequence YILMVLCVGVILGFGGGKAIG. The Extracellular portion of the chain corresponds to 424–427; it reads NAFG. Residues 428–448 form a helical membrane-spanning segment; sequence VVVIMVMLITTVLLTLVMIII. The Cytoplasmic segment spans residues 449 to 454; the sequence is WRTPLV. The helical transmembrane segment at 455–475 threads the bilayer; it reads LAGLYFVPFFIMEGAYVSAVF. Residues 476-480 lie on the Extracellular side of the membrane; that stretch reads TKIPE. The helical transmembrane segment at 481 to 501 threads the bilayer; sequence GGWLPFAVSITLAMIMFGWYY. At 502–707 the chain is on the cytoplasmic side; it reads GRQRKFEYEM…RVEIGMLYKV (206 aa).

Belongs to the HAK/KUP transporter (TC 2.A.72.3) family.

The protein resides in the membrane. Its function is as follows. High-affinity potassium transporter. This chain is Probable potassium transporter 17 (HAK17), found in Oryza sativa subsp. japonica (Rice).